A 129-amino-acid polypeptide reads, in one-letter code: MPKTVIIPPGTGTPIAPFSPGTLADGIVYVSGTLAFDKDNNVANPDDAEAQTRQVLETIKSVIETAGGTMDDVTMNHIFLTDWSNYQTINKVYAEYFPGDKPARYCIQCGLVKPGFVVEIASVAHIGKT.

The protein belongs to the RutC family.

The catalysed reaction is (Z)-3-aminoacrylate + H2O + H(+) = 3-oxopropanoate + NH4(+). In terms of biological role, involved in pyrimidine catabolism. Catalyzes the deamination of 3-aminoacrylate to malonic semialdehyde, a reaction that can also occur spontaneously. RutC may facilitate the reaction and modulate the metabolic fitness, rather than catalyzing essential functions. The chain is 3-aminoacrylate deaminase RutC from Caulobacter sp. (strain K31).